The following is an 881-amino-acid chain: Dynamin-like GTPase MGM1, mitochondrial (881 aa).

The N-terminal 59 residues, 1–59 (MNASPVRLLILRRQLATHPAILYSSPYIKSPLVHLHSRMSNVHRSAHANALSFVITRRS), are a transit peptide targeting the mitochondrion. The Mitochondrial matrix segment spans residues 60 to 72 (ISHFPKIISKIIR). A helical; Signal-anchor for type II membrane protein transmembrane segment spans residues 73–92 (LPIYVGGGMAAAGSYIAYKM). Residues 93-881 (EEASSFTKDK…KSYKGVSKNL (789 aa)) lie on the Mitochondrial intermembrane side of the membrane. Residues 145–183 (ATSLDDDESKRQGDPKDDDDEDDDDEDDENDSVDTTQDE) are disordered. Positions 160–176 (KDDDDEDDDDEDDENDS) are enriched in acidic residues. The 299-residue stretch at 207-505 (HLTLPSIVVI…LEISMSNALE (299 aa)) folds into the Dynamin-type G domain. Positions 217-224 (GSQSSGKS) are G1 motif. Positions 220, 221, 222, 223, 224, 225, and 239 each coordinate GTP. A Mg(2+)-binding site is contributed by Ser-224. The G2 motif stretch occupies residues 243 to 245 (VTR). The Mg(2+) site is built by Thr-244 and Asp-317. Positions 317-320 (DLPG) are G3 motif. Positions 385–388 (TKLD) are G4 motif. Positions 386, 388, and 415 each coordinate GTP. A G5 motif region spans residues 414-417 (ITKT). Positions 668-780 (STADQVENCI…KMLKNKCHST (113 aa)) are paddle region. Cys-777 and Cys-786 are oxidised to a cystine. One can recognise a GED domain in the interval 780 to 872 (TIEKDRCPEV…KIDSILVFKK (93 aa)).

This sequence belongs to the TRAFAC class dynamin-like GTPase superfamily. Dynamin/Fzo/YdjA family. As to quaternary structure, oligomeric complex consisting of membrane-bound and soluble forms of MGM1. Associates with FZO1 through interaction with the intermembrane space domain of UGO1 which binds FZO1 through its cytoplasmic domain. Cleavage of the transit peptide by mitochondrial processing protease (MPP) produces a long integral membrane form of MGM1 (l-MGM1). Further processing by the rhomboid protease PCP1 produces a short peripheral membrane form of MGM1 (s-MGM1). Both isoforms are required for full activity.

The protein resides in the mitochondrion inner membrane. It is found in the mitochondrion intermembrane space. The enzyme catalyses GTP + H2O = GDP + phosphate + H(+). In terms of biological role, dynamin-related GTPase that is essential for normal mitochondrial morphology by mediating fusion of the mitochondrial inner membranes, regulating cristae morphology and maintaining respiratory chain function. Exists in two forms: the transmembrane, long form (Dynamin-like GTPase MGM1, long form; L-MGM1), which is tethered to the inner mitochondrial membrane, and the short soluble form (Dynamin-like GTPase MGM1, short form; S-MGM1), which results from proteolytic cleavage and localizes in the intermembrane space. Both forms (L-MGM1 and S-MGM1) cooperate to catalyze the fusion of the mitochondrial inner membrane. The equilibrium between L-MGM1 and S-MGM1 is essential: excess levels of S-MGM1, following loss of mitochondrial membrane potential, lead to an impaired equilibrium between L-MGM1 and S-MGM1, inhibiting mitochondrial fusion. Plays a role in the maintenance and remodeling of mitochondrial cristae, some invaginations of the mitochondrial inner membrane that provide an increase in the surface area. Probably acts by forming helical filaments at the inside of inner membrane tubes with the shape and dimensions of crista junctions. Its function is as follows. Constitutes the transmembrane long form (L-MGM1) that plays a central role in mitochondrial inner membrane fusion and cristae morphology. L-MGM1 and the soluble short form (S-MGM1) form higher-order helical assemblies that coordinate the fusion of mitochondrial inner membranes. Inner membrane-anchored L-MGM1 molecules initiate membrane remodeling by recruiting soluble S-MGM1 to rapidly polymerize into a flexible cylindrical scaffold encaging the mitochondrial inner membrane. Once at the membrane surface, the formation of S-MGM1 helices induce bilayer curvature. MGM1 dimerization through the paddle region, which inserts into cardiolipin-containing membrane, promotes GTP hydrolysis and the helical assembly of a flexible MGM1 lattice on the membrane, which drives membrane curvature and mitochondrial fusion. Constitutes the soluble short form (S-MGM1) generated by cleavage by PCP1, which plays a central role in mitochondrial inner membrane fusion and cristae morphology. The transmembrane long form (L-MGM1) and the S-MGM1 form higher-order helical assemblies that coordinate the fusion of mitochondrial inner membranes. Inner membrane-anchored L-MGM1 molecules initiate membrane remodeling by recruiting soluble S-MGM1 to rapidly polymerize into a flexible cylindrical scaffold encaging the mitochondrial inner membrane. Once at the membrane surface, the formation of S-MGM1 helices induce bilayer curvature. MGM1 dimerization through the paddle region, which inserts into cardiolipin-containing membrane, promotes GTP hydrolysis and the helical assembly of a flexible MGM1 lattice on the membrane, which drives membrane curvature and mitochondrial fusion. Excess levels of S-MGM1 produced by cleavage by PCP1 following stress conditions that induce loss of mitochondrial membrane potential, lead to an impaired equilibrium between L-MGM1 and S-MGM1, thereby inhibiting mitochondrial fusion. This is Dynamin-like GTPase MGM1, mitochondrial from Saccharomyces cerevisiae (strain ATCC 204508 / S288c) (Baker's yeast).